Consider the following 579-residue polypeptide: MDFEDDYTHSACRNTYQSFNGMDRDYGPGSYGGMDRDYGHGSYGGQRSMDSYLNQSYGMDNHSGGGGGSRFGPYESYDSRSSLGGRDLYRSGYGFNEPEQSRFGGSYGGRFESSYRNSLDSFGGRNQGGSSWEAPYSRSKLRPGFMEDRGRENYSSYSSFSSPHMKPAPVGSRGRGTPAYPESTFGSRNYDAFGGPSTGRGRGRGHMSDFGSIHRPGIVVDYQNKPTNVTVAAARGIKRKMIQPFNKPGGTFIKKPKLAKPVEKMSLSKSPTKTDPKNEEEEKRRIEARREKQRRRREKNSEKYGDGYRMAFTCSFCKFRTFEEKDIELHLESASHQETLDHIQKQTKFDKVVMEFLHECMVNKFKKTSIRKQQTNNQTEAVKIIEKDVMEGVTADDHMMKVETVHCSACSVYIPALHSSVQQHLKSPDHIKGKQAYKEQIKRESVLTATSILNNPIVKARYERFIKGENPFEIQDHSQDQQIEGDEEEEEKIDEPVEEEEEEEEEEEEVGEVEEAEEVGEGGGVEGVGDTEEGGDVEGEGEVGAVGEGEGEGEGVGEVEEEEAKEEPVGFSVDQAEEN.

The tract at residues 1 to 124 (MDFEDDYTHS…YRNSLDSFGG (124 aa)) is mediates transcriptional activation. Phosphoserine is present on residues Ser-48, Ser-56, Ser-63, Ser-69, Ser-81, Ser-82, Ser-91, Ser-106, Ser-114, Ser-118, Ser-121, and Ser-137. Lys-140 is covalently cross-linked (Glycyl lysine isopeptide (Lys-Gly) (interchain with G-Cter in SUMO2)). The interval 154–194 (YSSYSSFSSPHMKPAPVGSRGRGTPAYPESTFGSRNYDAFG) is disordered. Position 173 is an omega-N-methylarginine (Arg-173). A Phosphoserine modification is found at Ser-212. Arg-235 is modified (omega-N-methylarginine). Positions 238-260 (KRKMIQPFNKPGGTFIKKPKLAK) match the Bipartite nuclear localization signal motif. A Glycyl lysine isopeptide (Lys-Gly) (interchain with G-Cter in SUMO2) cross-link involves residue Lys-240. Lys-247 is subject to N6-acetyllysine; alternate. Lys-247 is covalently cross-linked (Glycyl lysine isopeptide (Lys-Gly) (interchain with G-Cter in SUMO2); alternate). Residues 248-302 (PGGTFIKKPKLAKPVEKMSLSKSPTKTDPKNEEEEKRRIEARREKQRRRREKNSE) form a disordered region. At Thr-251 the chain carries Phosphothreonine. Residues Lys-254 and Lys-264 each participate in a glycyl lysine isopeptide (Lys-Gly) (interchain with G-Cter in SUMO2) cross-link. Phosphoserine is present on Ser-270. The span at 272-290 (TKTDPKNEEEEKRRIEARR) shows a compositional bias: basic and acidic residues. Residues 314–336 (CSFCKFRTFEEKDIELHLESASH) form a C2H2 AKAP95-type 1 zinc finger. Lys-401 participates in a covalent cross-link: Glycyl lysine isopeptide (Lys-Gly) (interchain with G-Cter in SUMO2). The C2H2 AKAP95-type 2 zinc finger occupies 407 to 430 (CSACSVYIPALHSSVQQHLKSPDH). Residues Lys-459 and Lys-467 each participate in a glycyl lysine isopeptide (Lys-Gly) (interchain with G-Cter in SUMO2) cross-link. The interval 470-579 (NPFEIQDHSQ…GFSVDQAEEN (110 aa)) is disordered. Acidic residues-rich tracts occupy residues 483 to 520 (IEGD…EEVG), 529 to 541 (GDTE…EGEG), and 549 to 565 (GEGE…EEAK).

It belongs to the AKAP95 family. In terms of assembly, component of the DBIRD complex. Interacts with CCAR2; the interaction is direct.

The protein localises to the nucleus matrix. Its function is as follows. Core component of the DBIRD complex, a multiprotein complex that acts at the interface between core mRNP particles and RNA polymerase II (RNAPII) and integrates transcript elongation with the regulation of alternative splicing: the DBIRD complex affects local transcript elongation rates and alternative splicing of a large set of exons embedded in (A + T)-rich DNA regions. May play a role in neuronal differentiation and is able to bind DNA and activate expression in vitro. In Bos taurus (Bovine), this protein is DBIRD complex subunit ZNF326 (ZNF326).